Here is a 257-residue protein sequence, read N- to C-terminus: Cytochrome c oxidase subunit 3 (257 aa).

Helical transmembrane passes span 15–35 (PWPLATGMGAFAMTSGLVKWF), 82–102 (GMILFIISEVFFFVSFFWGFF), 124–144 (FLSALLNTSILLASGVTVTWA), 156–176 (CLQGLLFTVLLGLYFSFLQGL), 194–214 (FFLATGFHGLHVLIGTIFLMI), and 235–255 (AWYWHFVDVVWLFLYLSIYWW).

This sequence belongs to the cytochrome c oxidase subunit 3 family. As to quaternary structure, component of the cytochrome c oxidase (complex IV, CIV), a multisubunit enzyme composed of a catalytic core of 3 subunits and several supernumerary subunits. The complex exists as a monomer or a dimer and forms supercomplexes (SCs) in the inner mitochondrial membrane with ubiquinol-cytochrome c oxidoreductase (cytochrome b-c1 complex, complex III, CIII).

It localises to the mitochondrion inner membrane. The catalysed reaction is 4 Fe(II)-[cytochrome c] + O2 + 8 H(+)(in) = 4 Fe(III)-[cytochrome c] + 2 H2O + 4 H(+)(out). In terms of biological role, component of the cytochrome c oxidase, the last enzyme in the mitochondrial electron transport chain which drives oxidative phosphorylation. The respiratory chain contains 3 multisubunit complexes succinate dehydrogenase (complex II, CII), ubiquinol-cytochrome c oxidoreductase (cytochrome b-c1 complex, complex III, CIII) and cytochrome c oxidase (complex IV, CIV), that cooperate to transfer electrons derived from NADH and succinate to molecular oxygen, creating an electrochemical gradient over the inner membrane that drives transmembrane transport and the ATP synthase. Cytochrome c oxidase is the component of the respiratory chain that catalyzes the reduction of oxygen to water. Electrons originating from reduced cytochrome c in the intermembrane space (IMS) are transferred via the dinuclear copper A center (CU(A)) of subunit 2 and heme A of subunit 1 to the active site in subunit 1, a binuclear center (BNC) formed by heme A3 and copper B (CU(B)). The BNC reduces molecular oxygen to 2 water molecules using 4 electrons from cytochrome c in the IMS and 4 protons from the mitochondrial matrix. This Artemia franciscana (Brine shrimp) protein is Cytochrome c oxidase subunit 3 (COIII).